Reading from the N-terminus, the 402-residue chain is 1-deoxy-D-xylulose 5-phosphate reductoisomerase (402 aa).

Positions 13, 14, 15, 16, and 126 each coordinate NADPH. A 1-deoxy-D-xylulose 5-phosphate-binding site is contributed by K127. NADPH is bound at residue E128. Mn(2+) is bound at residue D152. 1-deoxy-D-xylulose 5-phosphate-binding residues include S153, E154, S188, and H211. E154 contacts Mn(2+). G217 contacts NADPH. 1-deoxy-D-xylulose 5-phosphate is bound by residues S224, N229, K230, and E233. E233 is a Mn(2+) binding site.

It belongs to the DXR family. Mg(2+) serves as cofactor. It depends on Mn(2+) as a cofactor.

The enzyme catalyses 2-C-methyl-D-erythritol 4-phosphate + NADP(+) = 1-deoxy-D-xylulose 5-phosphate + NADPH + H(+). Its pathway is isoprenoid biosynthesis; isopentenyl diphosphate biosynthesis via DXP pathway; isopentenyl diphosphate from 1-deoxy-D-xylulose 5-phosphate: step 1/6. Catalyzes the NADPH-dependent rearrangement and reduction of 1-deoxy-D-xylulose-5-phosphate (DXP) to 2-C-methyl-D-erythritol 4-phosphate (MEP). The polypeptide is 1-deoxy-D-xylulose 5-phosphate reductoisomerase (Psychrobacter cryohalolentis (strain ATCC BAA-1226 / DSM 17306 / VKM B-2378 / K5)).